We begin with the raw amino-acid sequence, 101 residues long: Large ribosomal subunit protein uL24 (101 aa).

This sequence belongs to the universal ribosomal protein uL24 family. Part of the 50S ribosomal subunit.

Functionally, one of two assembly initiator proteins, it binds directly to the 5'-end of the 23S rRNA, where it nucleates assembly of the 50S subunit. In terms of biological role, one of the proteins that surrounds the polypeptide exit tunnel on the outside of the subunit. This is Large ribosomal subunit protein uL24 from Borrelia garinii subsp. bavariensis (strain ATCC BAA-2496 / DSM 23469 / PBi) (Borreliella bavariensis).